We begin with the raw amino-acid sequence, 550 residues long: tRNA modification GTPase MnmE (550 aa).

The (6S)-5-formyl-5,6,7,8-tetrahydrofolate site is built by Arg-20, Glu-78, and Arg-116. The TrmE-type G domain maps to 212–478 (GFSVVIVGKP…LLDKIFDIIS (267 aa)). Residue Asn-222 participates in K(+) binding. Residues 222–227 (NVGKST), 241–247 (TDIPGTT), and 266–269 (DTAG) each bind GTP. Position 226 (Ser-226) interacts with Mg(2+). Thr-241, Ile-243, and Thr-246 together coordinate K(+). Thr-247 contributes to the Mg(2+) binding site. Lys-550 serves as a coordination point for (6S)-5-formyl-5,6,7,8-tetrahydrofolate.

It belongs to the TRAFAC class TrmE-Era-EngA-EngB-Septin-like GTPase superfamily. TrmE GTPase family. Homodimer. Heterotetramer of two MnmE and two MnmG subunits. It depends on K(+) as a cofactor.

The protein resides in the cytoplasm. In terms of biological role, exhibits a very high intrinsic GTPase hydrolysis rate. Involved in the addition of a carboxymethylaminomethyl (cmnm) group at the wobble position (U34) of certain tRNAs, forming tRNA-cmnm(5)s(2)U34. In Neorickettsia sennetsu (strain ATCC VR-367 / Miyayama) (Ehrlichia sennetsu), this protein is tRNA modification GTPase MnmE.